The sequence spans 156 residues: Small ribosomal subunit protein uS7 (156 aa).

Belongs to the universal ribosomal protein uS7 family. Part of the 30S ribosomal subunit. Contacts proteins S9 and S11.

Functionally, one of the primary rRNA binding proteins, it binds directly to 16S rRNA where it nucleates assembly of the head domain of the 30S subunit. Is located at the subunit interface close to the decoding center, probably blocks exit of the E-site tRNA. The sequence is that of Small ribosomal subunit protein uS7 from Prochlorococcus marinus subsp. pastoris (strain CCMP1986 / NIES-2087 / MED4).